The following is a 71-amino-acid chain: SPbeta prophage-derived uncharacterized protein YorP (71 aa).

This Bacillus subtilis (strain 168) protein is SPbeta prophage-derived uncharacterized protein YorP (yorP).